The chain runs to 218 residues: OPA3-like protein (218 aa).

Residues 129-179 (NEIMEKQFVLQKKKNELQSSTEEIDSTEKDFDELHKVILKVERELHTLRQN) adopt a coiled-coil conformation. A disordered region spans residues 175–218 (TLRQNTPSQNEQAEATPSKEIPRETVSEKADHPPSSNTKSVSTG). The segment covering 176-189 (LRQNTPSQNEQAEA) has biased composition (polar residues). The span at 194-206 (EIPRETVSEKADH) shows a compositional bias: basic and acidic residues. The segment covering 208–218 (PSSNTKSVSTG) has biased composition (polar residues).

This sequence belongs to the OPA3 family.

The polypeptide is OPA3-like protein (Schizosaccharomyces pombe (strain 972 / ATCC 24843) (Fission yeast)).